Consider the following 339-residue polypeptide: Tetraacyldisaccharide 4'-kinase (339 aa).

58–65 (TVGGSGKT) contributes to the ATP binding site.

It belongs to the LpxK family.

It catalyses the reaction a lipid A disaccharide + ATP = a lipid IVA + ADP + H(+). The protein operates within glycolipid biosynthesis; lipid IV(A) biosynthesis; lipid IV(A) from (3R)-3-hydroxytetradecanoyl-[acyl-carrier-protein] and UDP-N-acetyl-alpha-D-glucosamine: step 6/6. Transfers the gamma-phosphate of ATP to the 4'-position of a tetraacyldisaccharide 1-phosphate intermediate (termed DS-1-P) to form tetraacyldisaccharide 1,4'-bis-phosphate (lipid IVA). The chain is Tetraacyldisaccharide 4'-kinase from Shewanella baltica (strain OS195).